The chain runs to 47 residues: Large ribosomal subunit protein bL34 (47 aa).

It belongs to the bacterial ribosomal protein bL34 family.

In Mycobacterium leprae (strain TN), this protein is Large ribosomal subunit protein bL34 (rpmH).